The sequence spans 461 residues: UDP-N-acetylmuramate--L-alanine ligase (461 aa).

112–118 is an ATP binding site; sequence GTHGKTT.

It belongs to the MurCDEF family.

Its subcellular location is the cytoplasm. The enzyme catalyses UDP-N-acetyl-alpha-D-muramate + L-alanine + ATP = UDP-N-acetyl-alpha-D-muramoyl-L-alanine + ADP + phosphate + H(+). The protein operates within cell wall biogenesis; peptidoglycan biosynthesis. Cell wall formation. In Hydrogenovibrio crunogenus (strain DSM 25203 / XCL-2) (Thiomicrospira crunogena), this protein is UDP-N-acetylmuramate--L-alanine ligase.